Consider the following 1555-residue polypeptide: MGNSFDFGVLLILLKYFKSSRSQNGHSKQIRILLLNEMEKLEKTLFRLEQGFELQFRLGPTLQGKPVTVFTNYPFPGETFNREKFRSLEWENPTEREDDSDKYCKLNLQQSGSFQYYFLQGNEKSGGGYIVVDPILRVGADNHMLHLDCVTLQTFLAKCLGPFDEWESRLRVAKESGYNMIHFTPLQTLGLSRSCYSLADQLELNPDFSRPHKKYTWSDVGQLVEKLKREWNVLCITDVVYNHTAANSKWIQEHPECAYNLVNSPHLKPAWVLDRALWHFSCDVAEGKYKNRGVPALIENDHHLNCIRKVIWEDIFPKLHLWEFFQVDVYKAVEKFRGLLTQETWRVIKSDPKQHLKIIQDPEYRRFGCTVDMNIALATFIPHDNGPAAIEECCNWFRKRIEELNSEKHQLMNYHQEQAVNCLLGNVFYERLAGHGPKLGPVTRKYPLVTRYFTFPFEEMPVSTEETMIHLPNKACFFMAHNGWVMGDDPLRNFAEPGSDVYLRRELICWGDSVKLRYGTKPEDCPYLWAHMRKYTEIIATYFQGVRLDNCHSTPLHVAEYMLDAARKLQPNLYVVAELFTGSEDLDNIFVTRLGISSLIREAMSAYNSHEEGRLVYRYGGEPVGSFVQPCLRPLMPAIAHALFMDITHDNECPIVHRSVYDALPSTTIVSMACCASGSTRGYDELVPHQISVVSEERFYTKWNPEALPSNAGEVNFQSGIIAARCAINKLHQELGAKGFIQVYVDQVDEDIVAVTRHSPSIHQSFVAVSRTAFRNPKTSFYSKDVPQMCIPGKIEEVVLEARTIERNISPYRKDENSINGMPNITVEIREHIQLNESRIVKQAGVTTKGPNEYIQEIEFENLSPGSVIIFRVSLDPHAQVAVGILRNHLTQFSAHFKAGSLAVDNSDPILKIPFASIASKLTLAEINQILYRCESEEQEDGGGCYDIPNWSSLKYAGLQGLMSVLAEIRPKNDLGHPFCDNLRSGDWMIDYVSGRLISRSGTIAEVGKWLQAMFFYLKQIPRYLIPCYFDAILIGAYTTLLDIAWKQMSSFVQTGSTFVKHLSLGSVQMCGVGKFPSLPLLSPSLTDVPYRLNEITKEKEQCCVSLAAGLPHFSSGIFRCWGRDTFIALRGLLLITGRYLEARNIILAFAGTLRHGLIPNLLGEGTYARYNCRDAVWWWLQCIQDYCKMVPNGLDILKCPVSRMYPTDDSAPLPAGTLDQPLFDVIQEAMQRHMQGIQFRERNAGPQIDRNMKDEGFTVIAGVNEETGFVYGGNRFNCGTWMDKMGESDRARNRGIPATPRDGSAVEIVGLCKSTVRWLLELSKKNIFPYHEVRVKRHGKVVTVSYEEWNRKIQDNFEKRFHVSEDPSASNEEHPNLVHKRGIYKDSYGASSPWCDYQLRPNFTIAMVVAPELFTAEKAWKALEIAEKKLLGPLGMKTLDPDDMVYCGIYDNALDNDNYNLAKGFNYHQGPEWLWPVGYFLRAKLYFSKLMDRETNARTIFLVKNVLSRHYVHLERSPWKGLPELTNENGQYCPFSCETQAWSIATILETLYDL.

S87 is subject to Phosphoserine. Catalysis depends on residues D549, H552, and D650.

The protein belongs to the glycogen debranching enzyme family. Monomer. Interacts with NHLRC1/malin. The N-terminus is blocked. In terms of processing, ubiquitinated.

Its subcellular location is the cytoplasm. The enzyme catalyses Transfers a segment of a (1-&gt;4)-alpha-D-glucan to a new position in an acceptor, which may be glucose or a (1-&gt;4)-alpha-D-glucan.. It carries out the reaction Hydrolysis of (1-&gt;6)-alpha-D-glucosidic branch linkages in glycogen phosphorylase limit dextrin.. Its function is as follows. Multifunctional enzyme acting as 1,4-alpha-D-glucan:1,4-alpha-D-glucan 4-alpha-D-glycosyltransferase and amylo-1,6-glucosidase in glycogen degradation. In Oryctolagus cuniculus (Rabbit), this protein is Glycogen debranching enzyme (AGL).